Consider the following 658-residue polypeptide: Protein CFAP20DC (658 aa).

2 disordered regions span residues 312–522 (QQGE…EEEY) and 589–634 (PVNQ…LDSS). Residues 319–328 (SHPVKQTTPL) show a composition bias toward polar residues. The segment covering 339–349 (PPRDPSADKGS) has biased composition (basic and acidic residues). Low complexity-rich tracts occupy residues 351 to 363 (RRGL…SGSR) and 417 to 434 (SSGP…LLLD). Basic and acidic residues predominate over residues 494–506 (DPKEDSRVTKGDT). Over residues 507–521 (ELEDDFYGSDSSEEE) the composition is skewed to acidic residues. A compositionally biased stretch (polar residues) spans 625 to 634 (QPLEQSLDSS).

This is Protein CFAP20DC from Rattus norvegicus (Rat).